The following is a 528-amino-acid chain: MGDAPSPEEKLHLITRNLQEVLGEEKLKEILKERELKVYWGTATTGKPHVAYFVPMSKIADFLKAGCEVTILFADLHAYLDNMKAPWELLELRTSYYENVIKAMLESIGVPLEKLKFTKGTDYQLSKEYTLDVYRLSSLVTQHDAKKAGAEVVKQVEHPLLSGLLYPGLQALDEEYLKVDAQFGGIDQRKIFTFAEKYLPTLGYSKRVHLMNPMVPGLTGSKMSSSEEESKIDLLDRKEDVKKKLKKAFCEPGNVENNGVLSFVKHVLFPLKSEFVILRDEKWGGNKTYTIYQELEKDFAAEVVHPGDLKNSVEVALNKLLDPIREKFNTPALKKLASAAYPDPSKQKPTAKGPAKSSEPEEIIPSRLDIRVGKILSVEKHPDADSLYVEKIDVGEAEPRTVVSGLVQFVPKEELQDRLVVVLCNLKPQKMRGVDSQGMLLCASVEGVSRQVEPLDPPAGSAPGERVFVQGYEKGQPDEELKPKKKVFEKLQADFKISDDCVAQWKQTNFMTKLGFVSCKSLKGGNIS.

An N-acetylmethionine modification is found at Met1. Residue Gly2 is modified to N-acetylglycine; in Tyrosine--tRNA ligase, cytoplasmic, N-terminally processed. Residue Tyr39 coordinates L-tyrosine. Tyr39 serves as a coordination point for trans-resveratrol. A 'HIGH' region motif is present at residues 44-52; that stretch reads TTGKPHVAY. Tyr166, Gln170, Asp173, and Gln188 together coordinate L-tyrosine. 2 residues coordinate trans-resveratrol: Gln170 and Asp173. An N6-acetyllysine modification is found at Lys197. Ser205 carries the phosphoserine modification. Lys206 carries the post-translational modification N6-acetyllysine. Positions 222–226 match the 'KMSKS' region motif; it reads KMSSS. The Nuclear localization signal signature appears at 242–247; that stretch reads KKKLKK. The interval 339 to 363 is disordered; that stretch reads AAYPDPSKQKPTAKGPAKSSEPEEI. Positions 364–468 constitute a tRNA-binding domain; it reads IPSRLDIRVG…AGSAPGERVF (105 aa). Residue Ser386 is modified to Phosphoserine. Residues Lys474, Lys482, and Lys490 each carry the N6-acetyllysine modification.

The protein belongs to the class-I aminoacyl-tRNA synthetase family. In terms of assembly, homodimer. Interacts (when binding to resveratrol) with PARP1; interaction stimulates the poly-ADP-ribosyltransferase activity of PARP1.

The protein localises to the cytoplasm. Its subcellular location is the nucleus. It carries out the reaction tRNA(Tyr) + L-tyrosine + ATP = L-tyrosyl-tRNA(Tyr) + AMP + diphosphate + H(+). Resveratrol strongly inhibits the tyrosine--tRNA ligase activity. Functionally, tyrosine--tRNA ligase that catalyzes the attachment of tyrosine to tRNA(Tyr) in a two-step reaction: tyrosine is first activated by ATP to form Tyr-AMP and then transferred to the acceptor end of tRNA(Tyr). Also acts as a positive regulator of poly-ADP-ribosylation in the nucleus, independently of its tyrosine--tRNA ligase activity. Activity is switched upon resveratrol-binding: resveratrol strongly inhibits the tyrosine--tRNA ligase activity and promotes relocalization to the nucleus, where YARS1 specifically stimulates the poly-ADP-ribosyltransferase activity of PARP1. The polypeptide is Tyrosine--tRNA ligase, cytoplasmic (Yars1) (Rattus norvegicus (Rat)).